A 343-amino-acid polypeptide reads, in one-letter code: Delta(1)-pyrroline-2-carboxylate/Delta(1)-piperideine-2-carboxylate reductase (343 aa).

S53 (charge relay system) is an active-site residue. The active-site Proton donor is H54. Position 58 (R58) interacts with substrate. 126–130 (HFAAL) contributes to the NADP(+) binding site. T166 serves as a coordination point for substrate. NADP(+) is bound at residue 184-186 (DLA). Substrate is bound at residue 192-193 (HG). The Charge relay system role is filled by D194. NADP(+) is bound by residues 236–237 (HK) and 309–315 (RLPGDRR).

This sequence belongs to the LDH2/MDH2 oxidoreductase family. As to quaternary structure, homodimer.

It carries out the reaction L-pipecolate + NADP(+) = Delta(1)-piperideine-2-carboxylate + NADPH + H(+). The catalysed reaction is L-proline + NADP(+) = 1-pyrroline-2-carboxylate + NADPH + H(+). It catalyses the reaction N-methyl-L-alanine + NADP(+) + H2O = methylamine + pyruvate + NADPH + H(+). With respect to regulation, is inhibited by the substrate analog pyrrole-2-carboxylate, and by 2-picolinate. Functionally, catalyzes the reduction of both Delta(1)-pyrroline-2-carboxylate (Pyr2C) and Delta(1)-piperideine-2-carboxylate (Pip2C) to L-proline and L-pipecolate, respectively, using NADPH as the electron donor. Can catalyze the reverse oxidation reactions, albeit at a much lower rate. Is also able to catalyze in vitro the NADPH-dependent formation of N-methylalanine from pyruvate and N-methylamine; can act on other alpha-keto acids and specifically uses methylamine and not ammonia for these reductive amination reactions. Can use NADH instead of NADPH, although with much less efficiency. The polypeptide is Delta(1)-pyrroline-2-carboxylate/Delta(1)-piperideine-2-carboxylate reductase (Pseudomonas syringae pv. tomato).